Here is a 192-residue protein sequence, read N- to C-terminus: Epoxyqueuosine reductase QueH (192 aa).

4 residues coordinate [4Fe-4S] cluster: C9, C10, C87, and C90. An intrachain disulfide couples C169 to C171.

Belongs to the QueH family.

It catalyses the reaction epoxyqueuosine(34) in tRNA + AH2 = queuosine(34) in tRNA + A + H2O. It functions in the pathway tRNA modification; tRNA-queuosine biosynthesis. In terms of biological role, catalyzes the conversion of epoxyqueuosine (oQ) to queuosine (Q), which is a hypermodified base found in the wobble positions of tRNA(Asp), tRNA(Asn), tRNA(His) and tRNA(Tyr). This is Epoxyqueuosine reductase QueH from Thermotoga maritima (strain ATCC 43589 / DSM 3109 / JCM 10099 / NBRC 100826 / MSB8).